Reading from the N-terminus, the 416-residue chain is Dihydroorotase (416 aa).

Histidine 53 and histidine 55 together coordinate Zn(2+). Residues 55–57 and asparagine 87 contribute to the substrate site; that span reads HLR. The Zn(2+) site is built by aspartate 145, histidine 172, histidine 225, and aspartate 298. Residue aspartate 298 is part of the active site. Histidine 302 is a binding site for substrate.

It belongs to the metallo-dependent hydrolases superfamily. DHOase family. Class I DHOase subfamily. Requires Zn(2+) as cofactor.

The enzyme catalyses (S)-dihydroorotate + H2O = N-carbamoyl-L-aspartate + H(+). It functions in the pathway pyrimidine metabolism; UMP biosynthesis via de novo pathway; (S)-dihydroorotate from bicarbonate: step 3/3. Its function is as follows. Catalyzes the reversible cyclization of carbamoyl aspartate to dihydroorotate. This chain is Dihydroorotase, found in Deinococcus radiodurans (strain ATCC 13939 / DSM 20539 / JCM 16871 / CCUG 27074 / LMG 4051 / NBRC 15346 / NCIMB 9279 / VKM B-1422 / R1).